A 375-amino-acid polypeptide reads, in one-letter code: 23S rRNA (uracil(747)-C(5))-methyltransferase RlmC (375 aa).

[4Fe-4S] cluster contacts are provided by Cys3, Cys11, Cys14, and Cys87. 4 residues coordinate S-adenosyl-L-methionine: Gln212, Phe241, Glu262, and Asn307. The Nucleophile role is filled by Cys334.

This sequence belongs to the class I-like SAM-binding methyltransferase superfamily. RNA M5U methyltransferase family. RlmC subfamily.

It catalyses the reaction uridine(747) in 23S rRNA + S-adenosyl-L-methionine = 5-methyluridine(747) in 23S rRNA + S-adenosyl-L-homocysteine + H(+). In terms of biological role, catalyzes the formation of 5-methyl-uridine at position 747 (m5U747) in 23S rRNA. This is 23S rRNA (uracil(747)-C(5))-methyltransferase RlmC from Shigella dysenteriae serotype 1 (strain Sd197).